Reading from the N-terminus, the 213-residue chain is Kynurenine formamidase (213 aa).

Position 18 (Trp-18) interacts with substrate. Residues His-48, His-52, and Asp-54 each contribute to the Zn(2+) site. His-58 acts as the Proton donor/acceptor in catalysis. Residues His-160 and Glu-172 each coordinate Zn(2+).

Belongs to the Cyclase 1 superfamily. KynB family. Homodimer. The cofactor is Zn(2+).

It carries out the reaction N-formyl-L-kynurenine + H2O = L-kynurenine + formate + H(+). Its pathway is amino-acid degradation; L-tryptophan degradation via kynurenine pathway; L-kynurenine from L-tryptophan: step 2/2. Its function is as follows. Catalyzes the hydrolysis of N-formyl-L-kynurenine to L-kynurenine, the second step in the kynurenine pathway of tryptophan degradation. This chain is Kynurenine formamidase, found in Burkholderia vietnamiensis (strain G4 / LMG 22486) (Burkholderia cepacia (strain R1808)).